A 130-amino-acid chain; its full sequence is Small ribosomal subunit protein uS11 (130 aa).

It belongs to the universal ribosomal protein uS11 family. As to quaternary structure, part of the 30S ribosomal subunit. Interacts with proteins S7 and S18. Binds to IF-3.

Functionally, located on the platform of the 30S subunit, it bridges several disparate RNA helices of the 16S rRNA. Forms part of the Shine-Dalgarno cleft in the 70S ribosome. The chain is Small ribosomal subunit protein uS11 from Acidiphilium cryptum (strain JF-5).